The following is a 442-amino-acid chain: Choline monooxygenase, chloroplastic (442 aa).

The transit peptide at 1-58 (MASSASMLINYPTTFCGVRNSSNPNNDQFSDQINIPSSLNNNINISKITSKTNKIIPK) directs the protein to the chloroplast. The Rieske domain occupies 123 to 229 (WQVAGYSDQI…VAIWGPFVLI (107 aa)). Positions 165, 167, 184, and 187 each coordinate [2Fe-2S] cluster. Residues H290 and H295 each coordinate Fe cation.

Belongs to the choline monooxygenase family. [2Fe-2S] cluster serves as cofactor. It depends on Fe cation as a cofactor. Mg(2+) is required as a cofactor.

The protein localises to the plastid. Its subcellular location is the chloroplast stroma. The catalysed reaction is choline + 2 reduced [2Fe-2S]-[ferredoxin] + O2 + 2 H(+) = betaine aldehyde hydrate + 2 oxidized [2Fe-2S]-[ferredoxin] + H2O. The protein operates within amine and polyamine biosynthesis; betaine biosynthesis via choline pathway; betaine aldehyde from choline (monooxygenase route): step 1/1. Functionally, catalyzes the first step of the osmoprotectant glycine betaine synthesis. This Amaranthus tricolor (Joseph's coat) protein is Choline monooxygenase, chloroplastic (CMO).